The chain runs to 398 residues: uncharacterized protein (398 aa).

Positions Met-1–Ala-22 are cleaved as a signal peptide. Residue Cys-23 is the site of N-palmitoyl cysteine attachment. Cys-23 carries the S-diacylglycerol cysteine lipid modification.

The protein resides in the cell membrane. This is an uncharacterized protein from Mycoplasma genitalium (strain ATCC 33530 / DSM 19775 / NCTC 10195 / G37) (Mycoplasmoides genitalium).